Consider the following 284-residue polypeptide: 2-dehydro-3-deoxyphosphooctonate aldolase (284 aa).

Belongs to the KdsA family.

The protein resides in the cytoplasm. It catalyses the reaction D-arabinose 5-phosphate + phosphoenolpyruvate + H2O = 3-deoxy-alpha-D-manno-2-octulosonate-8-phosphate + phosphate. Its pathway is carbohydrate biosynthesis; 3-deoxy-D-manno-octulosonate biosynthesis; 3-deoxy-D-manno-octulosonate from D-ribulose 5-phosphate: step 2/3. It participates in bacterial outer membrane biogenesis; lipopolysaccharide biosynthesis. This Salmonella enteritidis PT4 (strain P125109) protein is 2-dehydro-3-deoxyphosphooctonate aldolase.